The sequence spans 72 residues: Translation initiation factor IF-1 (72 aa).

The 72-residue stretch at 1-72 folds into the S1-like domain; sequence MAKDDVIEVE…NRGRITYRFK (72 aa). Phosphotyrosine is present on Tyr-60.

This sequence belongs to the IF-1 family. In terms of assembly, component of the 30S ribosomal translation pre-initiation complex which assembles on the 30S ribosome in the order IF-2 and IF-3, IF-1 and N-formylmethionyl-tRNA(fMet); mRNA recruitment can occur at any time during PIC assembly.

The protein resides in the cytoplasm. Its function is as follows. One of the essential components for the initiation of protein synthesis. Stabilizes the binding of IF-2 and IF-3 on the 30S subunit to which N-formylmethionyl-tRNA(fMet) subsequently binds. Helps modulate mRNA selection, yielding the 30S pre-initiation complex (PIC). Upon addition of the 50S ribosomal subunit IF-1, IF-2 and IF-3 are released leaving the mature 70S translation initiation complex. This chain is Translation initiation factor IF-1, found in Bacillus thuringiensis (strain Al Hakam).